We begin with the raw amino-acid sequence, 902 residues long: Phosphoenolpyruvate carboxylase (902 aa).

His-132 is an active-site residue. A disordered region spans residues 327-346; it reads DALERPEKTAGKKSSKRTPY. Lys-561 is a catalytic residue.

Belongs to the PEPCase type 1 family. Mg(2+) is required as a cofactor.

It carries out the reaction oxaloacetate + phosphate = phosphoenolpyruvate + hydrogencarbonate. Functionally, forms oxaloacetate, a four-carbon dicarboxylic acid source for the tricarboxylic acid cycle. The polypeptide is Phosphoenolpyruvate carboxylase (Corynebacterium diphtheriae (strain ATCC 700971 / NCTC 13129 / Biotype gravis)).